Consider the following 128-residue polypeptide: Ribonuclease P protein component (128 aa).

This sequence belongs to the RnpA family. Consists of a catalytic RNA component (M1 or rnpB) and a protein subunit.

The catalysed reaction is Endonucleolytic cleavage of RNA, removing 5'-extranucleotides from tRNA precursor.. Functionally, RNaseP catalyzes the removal of the 5'-leader sequence from pre-tRNA to produce the mature 5'-terminus. It can also cleave other RNA substrates such as 4.5S RNA. The protein component plays an auxiliary but essential role in vivo by binding to the 5'-leader sequence and broadening the substrate specificity of the ribozyme. The chain is Ribonuclease P protein component from Mycoplasma genitalium (strain ATCC 33530 / DSM 19775 / NCTC 10195 / G37) (Mycoplasmoides genitalium).